Here is a 385-residue protein sequence, read N- to C-terminus: Succinate--CoA ligase [ADP-forming] subunit beta (385 aa).

Residues 9–244 enclose the ATP-grasp domain; the sequence is KEVLRKYGVS…LDEEDPKEIE (236 aa). Residues Lys-46, 53–55, Glu-99, Cys-102, and Glu-107 contribute to the ATP site; that span reads GRG. Mg(2+)-binding residues include Asn-199 and Asp-213. Substrate-binding positions include Asn-264 and 321–323; that span reads GIM.

The protein belongs to the succinate/malate CoA ligase beta subunit family. Heterotetramer of two alpha and two beta subunits. The cofactor is Mg(2+).

The catalysed reaction is succinate + ATP + CoA = succinyl-CoA + ADP + phosphate. It carries out the reaction GTP + succinate + CoA = succinyl-CoA + GDP + phosphate. It functions in the pathway carbohydrate metabolism; tricarboxylic acid cycle; succinate from succinyl-CoA (ligase route): step 1/1. Succinyl-CoA synthetase functions in the citric acid cycle (TCA), coupling the hydrolysis of succinyl-CoA to the synthesis of either ATP or GTP and thus represents the only step of substrate-level phosphorylation in the TCA. The beta subunit provides nucleotide specificity of the enzyme and binds the substrate succinate, while the binding sites for coenzyme A and phosphate are found in the alpha subunit. The polypeptide is Succinate--CoA ligase [ADP-forming] subunit beta (Bacillus velezensis (strain DSM 23117 / BGSC 10A6 / LMG 26770 / FZB42) (Bacillus amyloliquefaciens subsp. plantarum)).